The primary structure comprises 120 residues: U-scoloptoxin(20)-Cw1a (120 aa).

The N-terminal stretch at 1–26 (MNSTDRLLGVLLAVVALILLIRISEA) is a signal peptide. The interval 87-106 (SSGKSLTTTKDSSESRKKEI) is disordered. Residues 97-106 (DSSESRKKEI) show a composition bias toward basic and acidic residues.

Belongs to the scoloptoxin-20 family. Post-translationally, contains 3 disulfide bonds. Expressed by the venom gland.

The protein localises to the secreted. In Cormocephalus westwoodi (Westwood's green centipede), this protein is U-scoloptoxin(20)-Cw1a.